Here is a 496-residue protein sequence, read N- to C-terminus: RNA-binding motif protein, Y chromosome, family 1 member B (496 aa).

Residues Gly-8–Lys-85 form the RRM domain. Disordered regions lie at residues Asp-67 to Tyr-349 and Lys-452 to Tyr-496. Composition is skewed to low complexity over residues Pro-97–Gly-114 and Pro-149–Gly-159. A compositionally biased stretch (polar residues) spans Asn-175–Met-184. 6 stretches are compositionally biased toward basic and acidic residues: residues Arg-204–Gly-214, Asp-242–Ser-253, Ala-276–Tyr-289, Gly-313–Tyr-326, Ser-335–Tyr-349, and Gly-484–Tyr-496.

As to quaternary structure, interacts with splicing factor proteins SFRS3/SRP20, TRA2B/SFRS10, KHDRBS1/SAM68 and KHDRBS3. As to expression, testis-specific.

It is found in the nucleus. RNA-binding protein which may be involved in spermatogenesis. Required for sperm development, possibly by participating in pre-mRNA splicing in the testis. In Homo sapiens (Human), this protein is RNA-binding motif protein, Y chromosome, family 1 member B (RBMY1B).